The primary structure comprises 579 residues: DELLA protein GAIP (579 aa).

Residues 1 to 25 (MKREHHYLHPRPEPPSVATGSNRES) are disordered. A DELLA motif motif is present at residues 46 to 50 (DELLA). The GRAS domain occupies 202-570 (VDSQENGIQL…RPLIATSAWK (369 aa)). The tract at residues 209–263 (IQLVHALMVCAEAVQQNNLNLAEALVKRIDYLAVSQAGAMRKVATFFAEALARRI) is leucine repeat I (LRI). The interval 281 to 346 (QMHFYESCPY…SGPPTFRLTG (66 aa)) is VHIID. The short motif at 312–316 (VHVID) is the VHIID element. The leucine repeat II (LRII) stretch occupies residues 360–392 (DVGWKLVKFAETLHVEFEYRGFVANSLADLDAS). A PFYRE region spans residues 404 to 491 (VVVNSVFELH…EMYLGKQICN (88 aa)). The LXXLL motif motif lies at 412 to 416 (LHQLL). An SAW region spans residues 494-570 (ACEGADRVER…RPLIATSAWK (77 aa)).

Belongs to the GRAS family. DELLA subfamily. Post-translationally, phosphorylated. In terms of processing, ubiquitinated. Upon GA application it is ubiquitinated, leading to its subsequent degradation.

It localises to the nucleus. Functionally, probable transcriptional regulator that acts as a repressor of the gibberellin (GA) signaling pathway. Probably acts by participating in large multiprotein complexes that represses transcription of GA-inducible genes. Upon GA application, it is degraded by the proteasome, allowing the GA signaling pathway. This Cucurbita maxima (Pumpkin) protein is DELLA protein GAIP (GAIP).